The sequence spans 324 residues: MANTPLIVSFGEMLIDFVPDTSGVSLAESTGFLKAPGGAPANVACAITKLGGKSAFIGKFGDDEFGHMLVNILKKNGVNSEGVCFDTNARTALAFVTLKKDGEREFMFYRNPSADMLLKESELNKDLIKKAKIFHYGSISLISEPCRTAHMAAMKTAKDAGVLLSYDPNVRLPLWPSTEAAIEGIKSIWNEADIIKVSDDEVTFLTRGDAEKDDVVLSLMHDKLKLLIVTDGEKGCRYYTKKFKGRVPGYAVKAVDTTGAGDSFVGAFLVSLGKDGSILDDEGKLKEALAFANACGAVCTTQKGAIPALPTPADAQKLMKSKSK.

The protein belongs to the carbohydrate kinase PfkB family.

The enzyme catalyses D-fructose + ATP = D-fructose 6-phosphate + ADP + H(+). The protein operates within glycan biosynthesis; starch biosynthesis. May play an important role in maintaining the flux of carbon towards starch formation. This Arabidopsis thaliana (Mouse-ear cress) protein is Probable fructokinase-5.